A 174-amino-acid chain; its full sequence is Putative NADH dehydrogenase/NAD(P)H nitroreductase AF_2267 (174 aa).

107–112 (AARCLG) contacts NAD(+).

The protein belongs to the nitroreductase family. FMN is required as a cofactor.

The sequence is that of Putative NADH dehydrogenase/NAD(P)H nitroreductase AF_2267 from Archaeoglobus fulgidus (strain ATCC 49558 / DSM 4304 / JCM 9628 / NBRC 100126 / VC-16).